Here is a 297-residue protein sequence, read N- to C-terminus: Small ribosomal subunit biogenesis GTPase RsgA (297 aa).

The CP-type G domain maps to 65–223 (TNEIGRPAVA…IADTPGFSAI (159 aa)). Residues 114-117 (SKAD) and 166-174 (GQSGAGKST) contribute to the GTP site. Positions 247, 252, 254, and 260 each coordinate Zn(2+).

It belongs to the TRAFAC class YlqF/YawG GTPase family. RsgA subfamily. Monomer. Associates with 30S ribosomal subunit, binds 16S rRNA. It depends on Zn(2+) as a cofactor.

The protein localises to the cytoplasm. One of several proteins that assist in the late maturation steps of the functional core of the 30S ribosomal subunit. Helps release RbfA from mature subunits. May play a role in the assembly of ribosomal proteins into the subunit. Circularly permuted GTPase that catalyzes slow GTP hydrolysis, GTPase activity is stimulated by the 30S ribosomal subunit. In Lactobacillus gasseri (strain ATCC 33323 / DSM 20243 / BCRC 14619 / CIP 102991 / JCM 1131 / KCTC 3163 / NCIMB 11718 / NCTC 13722 / AM63), this protein is Small ribosomal subunit biogenesis GTPase RsgA.